The chain runs to 296 residues: Transposase for insertion sequence element IS629 (296 aa).

The Integrase catalytic domain maps to 125–285 (VAERPDQLWV…TPPAEAEKAY (161 aa)).

Involved in the transposition of the insertion sequence. In Shigella sonnei, this protein is Transposase for insertion sequence element IS629.